The following is a 363-amino-acid chain: Fructose-bisphosphate aldolase C (363 aa).

Position 5 is a phosphotyrosine (Tyr5). 3 positions are modified to phosphoserine: Ser36, Ser39, and Ser45. Residue Arg56 participates in substrate binding. At Lys111 the chain carries N6-acetyllysine. Lys147 is a binding site for substrate. The active-site Proton acceptor is Glu188. The active-site Schiff-base intermediate with dihydroxyacetone-P is Lys230.

Belongs to the class I fructose-bisphosphate aldolase family. In terms of assembly, homotetramer. Interacts with ATP6V1E1. In terms of tissue distribution, high expression in the adult brain.

The catalysed reaction is beta-D-fructose 1,6-bisphosphate = D-glyceraldehyde 3-phosphate + dihydroxyacetone phosphate. It functions in the pathway carbohydrate degradation; glycolysis; D-glyceraldehyde 3-phosphate and glycerone phosphate from D-glucose: step 4/4. In Rattus norvegicus (Rat), this protein is Fructose-bisphosphate aldolase C (Aldoc).